The sequence spans 324 residues: Spheroidene monooxygenase (324 aa).

The disordered stretch occupies residues G226–A324. Low complexity-rich tracts occupy residues P248–P278 and V287–G313.

It belongs to the CrtA family. Heme is required as a cofactor.

It carries out the reaction spheroidene + 4 reduced [2Fe-2S]-[ferredoxin] + 2 O2 + 4 H(+) = spheroiden-2-one + 4 oxidized [2Fe-2S]-[ferredoxin] + 3 H2O. The catalysed reaction is spheroidene + 2 reduced [2Fe-2S]-[ferredoxin] + O2 + 2 H(+) = 2-hydroxyspheroidene + 2 oxidized [2Fe-2S]-[ferredoxin] + H2O. The enzyme catalyses 2-hydroxyspheroidene + 2 reduced [2Fe-2S]-[ferredoxin] + O2 + 2 H(+) = 2,2-dihydroxyspheroidene + 2 oxidized [2Fe-2S]-[ferredoxin] + H2O. It catalyses the reaction 2,2-dihydroxyspheroidene = spheroiden-2-one + H2O. Its pathway is carotenoid biosynthesis; spheroidene biosynthesis. Functionally, involved in the biosynthesis of the carotenoid spheroidene. Catalyzes the introduction of one keto group at the C-2 position of spheroidene. In vitro, can use nonnative substrates and produce oxocarotenoids with a hydroxy and/or a keto group, derived from neurosporene, lycopene, 3,4-didehydrolycopene or 3,4,3',4'-tetradehydrolycopene. This chain is Spheroidene monooxygenase, found in Cereibacter sphaeroides (strain ATCC 17023 / DSM 158 / JCM 6121 / CCUG 31486 / LMG 2827 / NBRC 12203 / NCIMB 8253 / ATH 2.4.1.) (Rhodobacter sphaeroides).